Reading from the N-terminus, the 2153-residue chain is Non-reducing polyketide synthase albA (2153 aa).

The segment at 8–244 is N-terminal acylcarrier protein transacylase domain (SAT); the sequence is YLFGDQTSDI…VKAPIHGPYH (237 aa). The Ketosynthase family 3 (KS3) domain occupies 375 to 806; the sequence is NSKIAIIGMS…GGNTALLLED (432 aa). Active-site for beta-ketoacyl synthase activity residues include Cys547, His682, and His724. The segment at 912-1232 is malonyl-CoA:ACP transacylase (MAT) domain; sequence FVFTGQGAQY…LASLHLAGID (321 aa). The For acyl/malonyl transferase activity role is filled by Ser1001. Residues 1286–1425 form an N-terminal hotdog fold region; it reads HEYLTTAAQK…CTVRFFDCAA (140 aa). The region spanning 1286 to 1598 is the PKS/mFAS DH domain; the sequence is HEYLTTAAQK…FQALSRKILD (313 aa). The interval 1290–1603 is product template (PT) domain; the sequence is TTAAQKVIET…RKILDTVLPP (314 aa). His1326 serves as the catalytic Proton acceptor; for dehydratase activity. The tract at residues 1452–1598 is C-terminal hotdog fold; the sequence is DAHRLGRGMV…FQALSRKILD (147 aa). The active-site Proton donor; for dehydratase activity is the Asp1511. The segment at 1608-1643 is disordered; that stretch reads KGPARPAASAQKAAPAAAASKSRASAPAPAKPAAKP. The span at 1610-1643 shows a compositional bias: low complexity; the sequence is PARPAASAQKAAPAAAASKSRASAPAPAKPAAKP. Residues 1643-1720 form the Carrier 1 domain; sequence PSAPSLVKRA…DFKQFLAPMS (78 aa). Ser1680 is modified (O-(pantetheine 4'-phosphoryl)serine). Residues 1720–1765 form a disordered region; sequence SQGEASDGSTSDPESSSSFNGGSSTDESSAGSPVSSPPNEKVTQVE. Low complexity predominate over residues 1725–1748; sequence SDGSTSDPESSSSFNGGSSTDESS. A compositionally biased stretch (polar residues) spans 1749–1765; it reads AGSPVSSPPNEKVTQVE. The region spanning 1764-1841 is the Carrier 2 domain; it reads VEQHATIKEI…DVEDALGLKP (78 aa). Ser1801 carries the O-(pantetheine 4'-phosphoryl)serine modification. A claisen cyclase domain region spans residues 1879–2151; the sequence is SPHPRSTSIL…ELGSFIGNAM (273 aa). The active-site For Claisen cyclase activity is the Ser1969.

The enzyme catalyses 6 malonyl-CoA + acetyl-CoA + 6 H(+) = naphtopyrone YWA1 + 6 CO2 + 7 CoA + H2O. It participates in secondary metabolite biosynthesis. Its function is as follows. Non-reducing polyketide synthase; part of the gene cluster that mediates the biosynthesis of aurasperone B, a dimeric gamma-naphthopyrone. The first step in the biosynthesis of aurasperone B is the production of gamma-naphthopyrone precursor YWA1 by the non-reducing polyketide synthase albA, via condensation of one acetyl-CoA starter unit with 6 malonyl-CoA units. YWA1 is then methylated by aunE at position C-6 to yield foncesin which is further methylated at position C-8 by aunD to produce fonsecin B. A key enzyme in the biosynthetic pathway is the cytochrome P450 monooxygenase aunB which catalyzes the oxidative dimerization of fonsecin B to aurasperone B. AunB also catalyzes the oxidative dimerization of rubrofusarin B into aurasperone A. The protein is Non-reducing polyketide synthase albA of Aspergillus niger (strain ATCC MYA-4892 / CBS 513.88 / FGSC A1513).